The following is a 385-amino-acid chain: 1-deoxy-D-xylulose 5-phosphate reductoisomerase (385 aa).

The NADPH site is built by Thr11, Gly12, Ser13, Ile14, Gln39, and Asn117. Lys118 serves as a coordination point for 1-deoxy-D-xylulose 5-phosphate. Glu119 is an NADPH binding site. Asp143 is a Mn(2+) binding site. 1-deoxy-D-xylulose 5-phosphate contacts are provided by Ser144, Glu145, Ser170, and His193. Glu145 lines the Mn(2+) pocket. NADPH is bound at residue Gly199. Residues Ser206, Asn211, Lys212, and Glu215 each coordinate 1-deoxy-D-xylulose 5-phosphate. A Mn(2+)-binding site is contributed by Glu215.

It belongs to the DXR family. Requires Mg(2+) as cofactor. It depends on Mn(2+) as a cofactor.

It carries out the reaction 2-C-methyl-D-erythritol 4-phosphate + NADP(+) = 1-deoxy-D-xylulose 5-phosphate + NADPH + H(+). Its pathway is isoprenoid biosynthesis; isopentenyl diphosphate biosynthesis via DXP pathway; isopentenyl diphosphate from 1-deoxy-D-xylulose 5-phosphate: step 1/6. Catalyzes the NADPH-dependent rearrangement and reduction of 1-deoxy-D-xylulose-5-phosphate (DXP) to 2-C-methyl-D-erythritol 4-phosphate (MEP). The polypeptide is 1-deoxy-D-xylulose 5-phosphate reductoisomerase (Thermomicrobium roseum (strain ATCC 27502 / DSM 5159 / P-2)).